The sequence spans 1259 residues: Cingulin (1259 aa).

The head stretch occupies residues 9–324 (MADQPIPVGQ…EKFPSLQAQP (316 aa)). The ZIM motif lies at 41–55 (QDSYGVAVRVQGIDG). The segment covering 69-79 (SSYDYDRHYSE) has biased composition (basic and acidic residues). Disordered stretches follow at residues 69-151 (SSYD…IDTK), 169-232 (VRGR…RQSL), 317-338 (FPSLQAQPGEDTRSLGSQKKEL), 941-969 (KSRREIGEAQKQAKEKTAEAERHQFNSSR), and 1192-1259 (REME…TSSC). Residues 80–100 (RSSTLDTAYSQSSRESAWSRG) are compositionally biased toward polar residues. Low complexity predominate over residues 117 to 127 (SATSQQSTSAS). Positions 128–145 (NKTNKNGLSTSSFSNQSS) are enriched in polar residues. The span at 179 to 204 (ALKDERKRSQSLDGRKNYQDTADSRE) shows a compositional bias: basic and acidic residues. The span at 220 to 229 (VSSANRSFAR) shows a compositional bias: polar residues. Residues 325–1218 (GEDTRSLGSQ…KTMEKESKRK (894 aa)) adopt a coiled-coil conformation. The span at 326 to 338 (EDTRSLGSQKKEL) shows a compositional bias: basic and acidic residues. Residues 1220-1259 (IRPAHNDDDDLSSDGEYGGSYDPSSITSLLTESNLQTSSC) form a tail region. Positions 1241–1259 (DPSSITSLLTESNLQTSSC) are enriched in polar residues.

This sequence belongs to the cingulin family. Parallel homodimer. Interacts with TJP1/ZO1 and TJP2/ZO2.

Its subcellular location is the cell junction. It is found in the tight junction. Probably plays a role in the formation and regulation of the tight junction (TJ) paracellular permeability barrier, possibly by linking ZO proteins to the actomyosin cytoskeleton. The chain is Cingulin from Xenopus tropicalis (Western clawed frog).